Reading from the N-terminus, the 573-residue chain is 2-succinyl-5-enolpyruvyl-6-hydroxy-3-cyclohexene-1-carboxylate synthase (573 aa).

This sequence belongs to the TPP enzyme family. MenD subfamily. In terms of assembly, homodimer. Mg(2+) is required as a cofactor. It depends on Mn(2+) as a cofactor. Thiamine diphosphate serves as cofactor.

The enzyme catalyses isochorismate + 2-oxoglutarate + H(+) = 5-enolpyruvoyl-6-hydroxy-2-succinyl-cyclohex-3-ene-1-carboxylate + CO2. The protein operates within quinol/quinone metabolism; 1,4-dihydroxy-2-naphthoate biosynthesis; 1,4-dihydroxy-2-naphthoate from chorismate: step 2/7. It functions in the pathway quinol/quinone metabolism; menaquinone biosynthesis. Catalyzes the thiamine diphosphate-dependent decarboxylation of 2-oxoglutarate and the subsequent addition of the resulting succinic semialdehyde-thiamine pyrophosphate anion to isochorismate to yield 2-succinyl-5-enolpyruvyl-6-hydroxy-3-cyclohexene-1-carboxylate (SEPHCHC). This chain is 2-succinyl-5-enolpyruvyl-6-hydroxy-3-cyclohexene-1-carboxylate synthase, found in Shewanella baltica (strain OS195).